Here is a 574-residue protein sequence, read N- to C-terminus: Penicillin-binding protein activator LpoA (574 aa).

A signal peptide spans 1–25; the sequence is MTILLQRAKFKKRLMPILFPLMLAG. The N-palmitoyl cysteine moiety is linked to residue cysteine 26. Residue cysteine 26 is the site of S-diacylglycerol cysteine attachment.

Belongs to the LpoA family. Interacts with PBP1a.

The protein localises to the cell outer membrane. Regulator of peptidoglycan synthesis that is essential for the function of penicillin-binding protein 1A (PBP1a). The polypeptide is Penicillin-binding protein activator LpoA (Mannheimia succiniciproducens (strain KCTC 0769BP / MBEL55E)).